The following is a 159-amino-acid chain: Globin CTT-W (159 aa).

The N-terminal stretch at Met1 to Ala16 is a signal peptide. Residues His17–Glu159 enclose the Globin domain. 2 residues coordinate heme b: His73 and His108.

This sequence belongs to the globin family.

This Chironomus thummi piger (Midge) protein is Globin CTT-W (CTT-W).